The chain runs to 183 residues: dTDP-4-dehydrorhamnose 3,5-epimerase (183 aa).

Residues arginine 24, glutamate 29, glutamine 48 to asparagine 50, and arginine 60 contribute to the substrate site. The active-site Proton acceptor is the histidine 63. Residues lysine 73 and histidine 120 each coordinate substrate. Residue tyrosine 133 is the Proton donor of the active site. The substrate site is built by glutamate 144 and lysine 169.

The protein belongs to the dTDP-4-dehydrorhamnose 3,5-epimerase family. In terms of assembly, homodimer.

It carries out the reaction dTDP-4-dehydro-6-deoxy-alpha-D-glucose = dTDP-4-dehydro-beta-L-rhamnose. The protein operates within carbohydrate biosynthesis; dTDP-L-rhamnose biosynthesis. Its pathway is bacterial outer membrane biogenesis; LPS O-antigen biosynthesis. Catalyzes the epimerization of the C3' and C5'positions of dTDP-6-deoxy-D-xylo-4-hexulose, forming dTDP-6-deoxy-L-lyxo-4-hexulose. In Salmonella typhimurium (strain LT2 / SGSC1412 / ATCC 700720), this protein is dTDP-4-dehydrorhamnose 3,5-epimerase.